Reading from the N-terminus, the 397-residue chain is Iripin-2 (397 aa).

Positions 1-21 are cleaved as a signal peptide; it reads MEDFKMKTLAAFLSLLVLCWA. Residues N109 and N270 are each glycosylated (N-linked (GlcNAc...) asparagine).

This sequence belongs to the serpin family. As to quaternary structure, interacts with mouse MCPT4. In terms of tissue distribution, female salivary gland. Ovary. Midgut.

The protein localises to the secreted. In terms of biological role, serine protease inhibitor that modulates blood feeding of ticks on vertebrate species. Inhibits host trypsin, thrombin (F2), alpha-chymotrypsin, cathepsin G (CTSG) and mast cell chymase (CMA1). Inhibits host cathepsin G- and thrombin-induced platelet aggregation. Inhibits acute inflammation in the host. Suppresses neutrophil recruitment in inflamed area. Does not inhibit host plasmin (PLG), factor Xa (F10), factor XIa (F11), elastase and proteinase 3/myeloblastin (PRTN3). (Microbial infection) Inhibits IL6 production by mouse splenic dendritic cells in response to Borrelia burgdorferi exposure. Decreases levels of STAT3 phosphorylation in mouse splenic dendritic cells in response to Borrelia burgdorferi exposure and in Borrelia-primed CD4+ T-lymphocytes. Inhibits differentiation of mouse Th17 cells, a subset of CD4+ T-lymphocytes that play a crucial role in protection against extracellular bacteria, in response to Borrelia burgdorferi exposure via inhibition of the IL6/STAT3 signaling pathway. The sequence is that of Iripin-2 from Ixodes ricinus (Common tick).